Consider the following 141-residue polypeptide: Hemoglobin subunit alpha-D (141 aa).

The Globin domain maps to Met1–Arg141. The heme b site is built by His58 and His87.

The protein belongs to the globin family. As to quaternary structure, heterotetramer of two alpha-D chains and two beta chains. Red blood cells.

Its function is as follows. Involved in oxygen transport from the lung to the various peripheral tissues. The sequence is that of Hemoglobin subunit alpha-D (HBAD) from Anser indicus (Bar-headed goose).